Reading from the N-terminus, the 463-residue chain is L-seryl-tRNA(Sec) selenium transferase (463 aa).

Position 295 is an N6-(pyridoxal phosphate)lysine (Lys295).

It belongs to the SelA family. In terms of assembly, homodecamer; pentamer of dimers. Binds only one seryl-tRNA(Sec) per dimer. The cofactor is pyridoxal 5'-phosphate.

The protein localises to the cytoplasm. The enzyme catalyses L-seryl-tRNA(Sec) + selenophosphate + H(+) = L-selenocysteinyl-tRNA(Sec) + phosphate. It functions in the pathway aminoacyl-tRNA biosynthesis; selenocysteinyl-tRNA(Sec) biosynthesis; selenocysteinyl-tRNA(Sec) from L-seryl-tRNA(Sec) (bacterial route): step 1/1. Functionally, converts seryl-tRNA(Sec) to selenocysteinyl-tRNA(Sec) required for selenoprotein biosynthesis. This Shigella dysenteriae serotype 1 (strain Sd197) protein is L-seryl-tRNA(Sec) selenium transferase.